Consider the following 292-residue polypeptide: Polyamine aminopropyltransferase 1 (292 aa).

The PABS domain occupies 1–244; that stretch reads MELGMFRLNI…YVNSFVFASD (244 aa). Position 35 (Gln-35) interacts with S-methyl-5'-thioadenosine. 2 residues coordinate spermidine: His-66 and Glu-90. S-methyl-5'-thioadenosine-binding positions include Asp-110 and 142–143; that span reads DG. Residue Asp-163 is the Proton acceptor of the active site.

Belongs to the spermidine/spermine synthase family. In terms of assembly, homodimer or homotetramer.

It localises to the cytoplasm. It catalyses the reaction norspermine + S-adenosyl 3-(methylsulfanyl)propylamine = caldopentamine + S-methyl-5'-thioadenosine + 2 H(+). The enzyme catalyses norspermidine + S-adenosyl 3-(methylsulfanyl)propylamine = norspermine + S-methyl-5'-thioadenosine + H(+). The catalysed reaction is S-adenosyl 3-(methylsulfanyl)propylamine + spermidine = thermospermine + S-methyl-5'-thioadenosine + H(+). Functionally, involved in the biosynthesis of polyamines which are thought to support the growth of thermophilic microorganisms under high-temperature conditions. It seems that long-chain and branched-chain of polyamines effectively stabilize DNA and RNA, respectively. Catalyzes the irreversible transfer of a propylamine group from the amino donor S-adenosylmethioninamine (decarboxy-AdoMet) to norspermidine, spermidine and norspermine to yield norspermine, thermospermine and caldopentamine, respectively. It can also synthesize sym-norspermidine (bis(3-aminopropyl)amine) from 1,3-diaminopropane with a very low activity. The biosynthesis of caldohexamine and caldoheptamine from caldopentamine has been also observed. This chain is Polyamine aminopropyltransferase 1, found in Hyperthermus butylicus (strain DSM 5456 / JCM 9403 / PLM1-5).